The sequence spans 410 residues: MLGMLRWTTAGESHGQALIATVEHMPAGVPVTKDEVSYQLARRRLGYGRGARMKFEQDALTFLTGIRHGLTLGSPISIMIGNTEWDKWTTIMSSDALDMEDPDNVAAMSSGRGAKLTRPRPGHADYAGMLKYGFDDARNVLERSSARETAARVAAATVARSFLRETLGVEVLSHVISIGASEPYTGAEPTFADIQAIDDSPVRAFGKDAEESMIAEIEAAKKAGDTLGGIVEVIVEGLPIGLGSHISGEDRLDAQIAAALMGIQAIKGVEIGDGFEEARRRGSEAHDEVFLDDNGVYRNTNRAGGLEGGMTNGETLRVRAGMKPISTVPRALKTIDMENGKAATGIHQRSDVCAVPAAGVVAEAMVTLVLARAVLQKFGGDSLSETKSNIDTYLKNIEERMKFEGLEDGA.

Residues R43 and R49 each coordinate NADP(+). FMN contacts are provided by residues 143–145, 264–265, G308, 323–327, and R349; these read RSS, QA, and KPIST.

Belongs to the chorismate synthase family. Homotetramer. FMNH2 serves as cofactor.

It catalyses the reaction 5-O-(1-carboxyvinyl)-3-phosphoshikimate = chorismate + phosphate. It participates in metabolic intermediate biosynthesis; chorismate biosynthesis; chorismate from D-erythrose 4-phosphate and phosphoenolpyruvate: step 7/7. In terms of biological role, catalyzes the anti-1,4-elimination of the C-3 phosphate and the C-6 proR hydrogen from 5-enolpyruvylshikimate-3-phosphate (EPSP) to yield chorismate, which is the branch point compound that serves as the starting substrate for the three terminal pathways of aromatic amino acid biosynthesis. This reaction introduces a second double bond into the aromatic ring system. The chain is Chorismate synthase from Corynebacterium glutamicum (strain ATCC 13032 / DSM 20300 / JCM 1318 / BCRC 11384 / CCUG 27702 / LMG 3730 / NBRC 12168 / NCIMB 10025 / NRRL B-2784 / 534).